The primary structure comprises 160 residues: Transcriptional repressor NrdR (160 aa).

The span at 1–11 (MRCPNCNSLDT) shows a compositional bias: polar residues. The tract at residues 1–20 (MRCPNCNSLDTQVKDSRPTE) is disordered. The segment at 3–34 (CPNCNSLDTQVKDSRPTEDSSVIRRRRVCIAC) is a zinc-finger region. One can recognise an ATP-cone domain in the interval 49 to 139 (LTVIKRNGRR…VYRNFREAKD (91 aa)).

Belongs to the NrdR family. The cofactor is Zn(2+).

Its function is as follows. Negatively regulates transcription of bacterial ribonucleotide reductase nrd genes and operons by binding to NrdR-boxes. The polypeptide is Transcriptional repressor NrdR (Rhodopseudomonas palustris (strain HaA2)).